A 1157-amino-acid chain; its full sequence is Hephaestin (1157 aa).

Positions 1–18 are cleaved as a signal peptide; sequence MKAGHLLWALLLMHSLWS. Over 19 to 1109 the chain is Extracellular; the sequence is IPTDGAIRNY…PIKDVEILSS (1091 aa). Plastocyanin-like domains follow at residues 24 to 206, 218 to 366, 370 to 559, 569 to 717, 730 to 902, and 910 to 1066; these read AIRN…LITC, QRKD…VDSC, PPVD…LLVC, KQKG…VSQC, ASRV…LVIC, and NGGR…SHEE. N-linked (GlcNAc...) asparagine glycosylation is found at Asn49 and Asn54. The Na(+) site is built by Gly70 and Tyr73. The Cu(2+) site is built by His126 and His128. His126 lines the O2 pocket. 3 residues coordinate Ca(2+): Lys134, Asp152, and Asp153. Asn164 carries N-linked (GlcNAc...) asparagine glycosylation. An intrachain disulfide couples Cys180 to Cys206. Positions 186 and 188 each coordinate Cu(2+). Position 186 (His186) interacts with O2. Residue Asn236 is glycosylated (N-linked (GlcNAc...) asparagine). Ser265 provides a ligand contact to Na(+). Residues Cys285 and Cys366 are joined by a disulfide bond. His304, Cys347, and His352 together coordinate Cu(2+). Residues Tyr416, Gly425, and Tyr428 each contribute to the Na(+) site. Cys533 and Cys559 are disulfide-bonded. Asn587 carries N-linked (GlcNAc...) asparagine glycosylation. A Na(+)-binding site is contributed by Ser616. Cys636 and Cys717 form a disulfide bridge. Positions 655, 698, 703, and 708 each coordinate Cu(2+). 2 N-linked (GlcNAc...) asparagine glycosylation sites follow: Asn713 and Asn757. The Na(+) site is built by Phe768 and Gly777. Cys876 and Cys902 are oxidised to a cystine. N-linked (GlcNAc...) asparagine glycosylation is present at Asn930. The Cu(2+) site is built by His999, His1002, His1004, His1044, Cys1045, His1046, His1050, and Met1055. His1002 and His1004 together coordinate O2. Residue His1046 coordinates O2. The chain crosses the membrane as a helical span at residues 1110–1130; that stretch reads ALIAICVLLLLIALALGGVVW. Over 1131-1157 the chain is Cytoplasmic; the sequence is YQHRQRKLRRNRRSILDDSFKLLSLKQ. Phosphoserine occurs at positions 1144, 1149, and 1154.

Belongs to the multicopper oxidase family. In terms of assembly, part of a complex composed of SLC40A1/ferroportin, TF/transferrin and HEPH/hephaestin that transfers iron from cells to transferrin. Cu cation is required as a cofactor.

The protein resides in the basolateral cell membrane. It catalyses the reaction 4 Fe(2+) + O2 + 4 H(+) = 4 Fe(3+) + 2 H2O. Its function is as follows. Plasma membrane ferroxidase that mediates the extracellular conversion of ferrous/Fe(2+) iron into its ferric/Fe(3+) form. Couples ferroportin which specifically exports ferrous/Fe(2+) iron from cells to transferrin that only binds and shuttles extracellular ferric/Fe(3+) iron throughout the body. By helping iron transfer from cells to blood mainly contributes to dietary iron absorption by the intestinal epithelium and more generally regulates iron levels in the body. This chain is Hephaestin, found in Mus musculus (Mouse).